The primary structure comprises 613 residues: Phosphomethylpyrimidine synthase (613 aa).

Substrate contacts are provided by residues Asn215, Met244, Tyr273, His309, 329–331 (SRG), 370–373 (DGLR), and Glu409. His413 lines the Zn(2+) pocket. Tyr436 provides a ligand contact to substrate. Residue His477 coordinates Zn(2+). Cys557, Cys560, and Cys565 together coordinate [4Fe-4S] cluster.

This sequence belongs to the ThiC family. As to quaternary structure, homodimer. It depends on [4Fe-4S] cluster as a cofactor.

It carries out the reaction 5-amino-1-(5-phospho-beta-D-ribosyl)imidazole + S-adenosyl-L-methionine = 4-amino-2-methyl-5-(phosphooxymethyl)pyrimidine + CO + 5'-deoxyadenosine + formate + L-methionine + 3 H(+). It participates in cofactor biosynthesis; thiamine diphosphate biosynthesis. Catalyzes the synthesis of the hydroxymethylpyrimidine phosphate (HMP-P) moiety of thiamine from aminoimidazole ribotide (AIR) in a radical S-adenosyl-L-methionine (SAM)-dependent reaction. The protein is Phosphomethylpyrimidine synthase of Paramagnetospirillum magneticum (strain ATCC 700264 / AMB-1) (Magnetospirillum magneticum).